A 499-amino-acid chain; its full sequence is Trichoplein keratin filament-binding protein (499 aa).

The stretch at 12–38 (SRVRTLEQQLVRQREQEARLRRQWEQH) forms a coiled coil. Disordered regions lie at residues 46–78 (DVRS…EEKQ) and 169–209 (VQQQ…EEEN). The segment covering 50 to 67 (SKQAQWSSRQSFHRSMSA) has biased composition (polar residues). Basic and acidic residues-rich tracts occupy residues 69-78 (QRDRMREEKQ) and 172-209 (QEKK…EEEN). Coiled coils occupy residues 71-133 (DRMR…ERRK), 168-306 (QVQQ…ALLE), and 359-484 (WEKR…MIRQ). The interval 74–499 (REEKQRKLEE…IHSRPRSAWT (426 aa)) is interaction with keratin proteins. The tract at residues 260-426 (KMMEESRRKT…RLTLRLEKEQ (167 aa)) is trichohyalin/plectin homology domain.

It belongs to the TCHP family.

It localises to the cytoplasm. The protein resides in the cytoskeleton. Its subcellular location is the microtubule organizing center. The protein localises to the centrosome. Functionally, may act as a 'capping' or 'branching' protein for keratin filaments in the cell periphery. May regulate K8/K18 filament and desmosome organization mainly at the apical or peripheral regions of simple epithelial cells. This chain is Trichoplein keratin filament-binding protein, found in Danio rerio (Zebrafish).